The chain runs to 217 residues: Adenylate kinase (217 aa).

10-15 lines the ATP pocket; it reads GAGKGT. The segment at 30–59 is NMP; that stretch reads STGDMLRAAVKAESELGLQVKEVMASGGLV. AMP contacts are provided by residues T31, R36, 57–59, 85–88, and Q92; these read GLV and GFPR. An LID region spans residues 122–159; the sequence is GRRVHEGSGRIYHVKYDPPKVEGKDDETGEALIQREDD. Residues R123 and 132-133 contribute to the ATP site; that span reads IY. R156 and R167 together coordinate AMP. G203 provides a ligand contact to ATP.

This sequence belongs to the adenylate kinase family. Monomer.

The protein localises to the cytoplasm. The enzyme catalyses AMP + ATP = 2 ADP. It functions in the pathway purine metabolism; AMP biosynthesis via salvage pathway; AMP from ADP: step 1/1. Its function is as follows. Catalyzes the reversible transfer of the terminal phosphate group between ATP and AMP. Plays an important role in cellular energy homeostasis and in adenine nucleotide metabolism. In Marinobacter nauticus (strain ATCC 700491 / DSM 11845 / VT8) (Marinobacter aquaeolei), this protein is Adenylate kinase.